A 113-amino-acid polypeptide reads, in one-letter code: Protein TrbJ (113 aa).

This is Protein TrbJ (trbJ) from Escherichia coli (strain K12).